Consider the following 585-residue polypeptide: Efflux pump dotC (585 aa).

Residues 1–34 show a composition bias toward basic and acidic residues; sequence MSEDHTKADNLSEKDPHSPERSDSSSHEDAHARE. Residues 1-45 are disordered; that stretch reads MSEDHTKADNLSEKDPHSPERSDSSSHEDAHAREEEESSDDDGAL. The N-linked (GlcNAc...) asparagine glycan is linked to Asn10. Over residues 35–44 the composition is skewed to acidic residues; that stretch reads EEESSDDDGA. The chain crosses the membrane as a helical span at residues 51–71; that stretch reads SLIAIVMIALSLIGLQLAVFL. Residue Asn91 is glycosylated (N-linked (GlcNAc...) asparagine). Helical transmembrane passes span 94-114, 132-152, 158-178, 186-206, 214-234, 247-267, 280-300, 323-343, 353-373, 385-405, 414-434, 449-471, and 524-544; these read AAYT…TPIW, ALFM…MLIT, GAAG…LFSL, GMIG…GGAF, WCFY…FFFL, FAAI…MFLF, SATV…FGLV, ALLV…YLPL, PILA…SAAA, LIPM…LINF, LIIY…APLV, TATF…QVLY, and SPMW…ILLV. The tract at residues 564–585 is disordered; sequence KKAEAERKAERQAKDLEKAQKS.

It belongs to the major facilitator superfamily. TCR/Tet family.

The protein resides in the cell membrane. Its subcellular location is the vacuole membrane. Its function is as follows. Efflux pump; part of the gene cluster that mediates the biosynthesis of dothistromin (DOTH), a polyketide toxin very similar in structure to the aflatoxin precursor, versicolorin B. One function of dotC may be to transport early-stage dothistromin biosynthetic intermediates from the cytoplasm into vacuoles, thereby affecting the rate of dothistromin production. The polypeptide is Efflux pump dotC (Dothistroma septosporum (Red band needle blight fungus)).